A 73-amino-acid polypeptide reads, in one-letter code: uncharacterized protein (73 aa).

This is an uncharacterized protein from Invertebrate iridescent virus 6 (IIV-6).